The primary structure comprises 57 residues: Small ribosomal subunit protein eS31 (57 aa).

4 residues coordinate Zn(2+): C29, C32, C47, and C50. A C4-type zinc finger spans residues 29–50; sequence CPRCGPGVFMANHKDRWSCGRC.

It belongs to the eukaryotic ribosomal protein eS31 family. As to quaternary structure, part of the 30S ribosomal subunit. Requires Zn(2+) as cofactor.

The protein is Small ribosomal subunit protein eS31 of Thermococcus kodakarensis (strain ATCC BAA-918 / JCM 12380 / KOD1) (Pyrococcus kodakaraensis (strain KOD1)).